A 57-amino-acid chain; its full sequence is UPF0391 membrane protein HNE_2348 (57 aa).

2 consecutive transmembrane segments (helical) span residues 4–24 (WALTFFILAIIAALLGFGGIA) and 27–47 (AASIAKILFFVFLALLVITFV).

Belongs to the UPF0391 family.

It is found in the cell membrane. The polypeptide is UPF0391 membrane protein HNE_2348 (Hyphomonas neptunium (strain ATCC 15444)).